Reading from the N-terminus, the 320-residue chain is Ribose-phosphate pyrophosphokinase 3 (320 aa).

Mg(2+) contacts are provided by aspartate 131, histidine 133, aspartate 142, and aspartate 146.

The protein belongs to the ribose-phosphate pyrophosphokinase family.

It localises to the cytoplasm. The enzyme catalyses D-ribose 5-phosphate + ATP = 5-phospho-alpha-D-ribose 1-diphosphate + AMP + H(+). It participates in metabolic intermediate biosynthesis; 5-phospho-alpha-D-ribose 1-diphosphate biosynthesis; 5-phospho-alpha-D-ribose 1-diphosphate from D-ribose 5-phosphate (route I): step 1/1. In terms of biological role, 5-phosphoribose 1-diphosphate synthase involved in nucleotide, histidine, and tryptophan biosynthesis. Active in heteromultimeric complexes with other 5-phosphoribose 1-diphosphate synthases (PRS2, PRS3, PRS4 and PRS5). The sequence is that of Ribose-phosphate pyrophosphokinase 3 (PRS3) from Saccharomyces cerevisiae (strain ATCC 204508 / S288c) (Baker's yeast).